A 475-amino-acid polypeptide reads, in one-letter code: 1-aminocyclopropane-1-carboxylate synthase CMA101 (475 aa).

Lysine 272 is modified (N6-(pyridoxal phosphate)lysine).

This sequence belongs to the class-I pyridoxal-phosphate-dependent aminotransferase family. Homodimer. Pyridoxal 5'-phosphate is required as a cofactor.

It catalyses the reaction S-adenosyl-L-methionine = 1-aminocyclopropane-1-carboxylate + S-methyl-5'-thioadenosine + H(+). The protein operates within alkene biosynthesis; ethylene biosynthesis via S-adenosyl-L-methionine; ethylene from S-adenosyl-L-methionine: step 1/2. In terms of biological role, catalyzes the formation of 1-aminocyclopropane-1-carboxylate, a direct precursor of ethylene in higher plants. The polypeptide is 1-aminocyclopropane-1-carboxylate synthase CMA101 (ACS2) (Cucurbita maxima (Pumpkin)).